A 205-amino-acid polypeptide reads, in one-letter code: Putative 3-methyladenine DNA glycosylase (205 aa).

The protein belongs to the DNA glycosylase MPG family.

The sequence is that of Putative 3-methyladenine DNA glycosylase from Mycolicibacterium paratuberculosis (strain ATCC BAA-968 / K-10) (Mycobacterium paratuberculosis).